The chain runs to 107 residues: Heme-degrading monooxygenase (107 aa).

The region spanning 2–94 (IIVTNTAKIT…YILDNKIAYY (93 aa)) is the ABM domain. Residue N6 coordinates Fe cation. Position 76 (H76) interacts with heme.

It belongs to the antibiotic biosynthesis monooxygenase family. Heme-degrading monooxygenase IsdG subfamily. Homodimer.

The protein localises to the cytoplasm. It carries out the reaction heme b + 3 reduced [NADPH--hemoprotein reductase] + 3 O2 = biliverdin IXalpha + CO + Fe(2+) + 3 oxidized [NADPH--hemoprotein reductase] + 3 H2O + H(+). Its function is as follows. Allows bacterial pathogens to use the host heme as an iron source. Catalyzes the oxidative degradation of the heme macrocyclic porphyrin ring to the biliverdin in the presence of a suitable electron donor such as ascorbate or NADPH--cytochrome P450 reductase, with subsequent release of free iron. The protein is Heme-degrading monooxygenase of Bacillus cereus (strain ATCC 14579 / DSM 31 / CCUG 7414 / JCM 2152 / NBRC 15305 / NCIMB 9373 / NCTC 2599 / NRRL B-3711).